Here is a 384-residue protein sequence, read N- to C-terminus: Putative 8-amino-7-oxononanoate synthase (384 aa).

Substrate is bound at residue R18. 105–106 (GY) contacts pyridoxal 5'-phosphate. H130 contacts substrate. Pyridoxal 5'-phosphate contacts are provided by residues S176, 201 to 204 (DDAH), and 233 to 236 (TLSK). The residue at position 236 (K236) is an N6-(pyridoxal phosphate)lysine. Residue T349 participates in substrate binding.

It belongs to the class-II pyridoxal-phosphate-dependent aminotransferase family. BioF subfamily. Homodimer. It depends on pyridoxal 5'-phosphate as a cofactor.

The catalysed reaction is 6-carboxyhexanoyl-[ACP] + L-alanine + H(+) = (8S)-8-amino-7-oxononanoate + holo-[ACP] + CO2. It functions in the pathway cofactor biosynthesis; biotin biosynthesis. Catalyzes the decarboxylative condensation of pimeloyl-[acyl-carrier protein] and L-alanine to produce 8-amino-7-oxononanoate (AON), [acyl-carrier protein], and carbon dioxide. The protein is Putative 8-amino-7-oxononanoate synthase (bioF) of Desulfovibrio desulfuricans (strain ATCC 27774 / DSM 6949 / MB).